Reading from the N-terminus, the 597-residue chain is Centrosomal protein of 70 kDa (597 aa).

A disordered region spans residues 1 to 23 (MFPVAPKPQDSSQASDRLMTEKQ). Coiled coils occupy residues 66–179 (MRQN…QMEV) and 254–326 (TYKG…KKAE). A TPR repeat occupies 483–516 (NGVYPRMNEVYTRLGEMNNAVRNLQELLELDSSS).

In terms of assembly, directly interacts with tubulin-gamma; this interaction determines centrosomal localization.

Its subcellular location is the cytoplasm. The protein localises to the cytoskeleton. It localises to the microtubule organizing center. The protein resides in the centrosome. Functionally, plays a role in the organization of both preexisting and nascent microtubules in interphase cells. During mitosis, required for the organization and orientation of the mitotic spindle. The protein is Centrosomal protein of 70 kDa (CEP70) of Pongo abelii (Sumatran orangutan).